The primary structure comprises 252 residues: MAASALAWLLLWAAGLVGRLAADISDARFSDGVRATCSEIILRQEFLKDGFHRDLLIKVKFGESIEDLQTCRLLIKHYIPTGLFVDPYELASLRERNITEAVMVSESFNLEAPNYLSTESAVLIYARQDAQCIDCFQAFLPVHYRYHRPHKKDGDTLIVVNNPDLLMHCDQEFPILKCWAQSEVAAPCSLKSEEICQWKNMQYKSILKNLTVQVPVGLTIHTSLVCSVTLLITVLCSTLILLAVFKYGHFSL.

Positions 1 to 22 (MAASALAWLLLWAAGLVGRLAA) are cleaved as a signal peptide. N-linked (GlcNAc...) asparagine glycosylation is found at asparagine 97 and asparagine 209. The chain crosses the membrane as a helical span at residues 225–245 (VCSVTLLITVLCSTLILLAVF).

This sequence belongs to the PIGX family. In terms of assembly, part of the glycosylphosphatidylinositol-mannosyltransferase I complex that is composed of PIGM and PIGX. Interacts with PIGM; PIGX stabilizes PIGM.

The protein localises to the endoplasmic reticulum membrane. The protein operates within glycolipid biosynthesis; glycosylphosphatidylinositol-anchor biosynthesis. In terms of biological role, stabilizing subunit of the glycosylphosphatidylinositol-mannosyltransferase I complex which catalyzes the transfer of the first mannose, via an alpha-1,4 bond from a dolichol-phosphate-mannose (Dol-P-Man) to the glucosaminyl acyl phosphatidylinositol (GlcN-(acyl)PI) intermediate to generate alpha-D-Man-(1-&gt;4)-alpha-D-GlcN-(1-&gt;6)-(1-radyl,2-acyl-sn-glycero-3-phospho)-2-acyl-inositol and participates in the sixth step of the glycosylphosphatidylinositol-anchor biosynthesis. Probably acts by stabilizing the mannosyltransferase PIGM. This is GPI alpha-1,4-mannosyltransferase I, stabilizing subunit from Rattus norvegicus (Rat).